We begin with the raw amino-acid sequence, 392 residues long: MVVEPKILNNICITAHPLGCAKEVENHINYVKSQPKVKSNVKNALILGASGGYGLASRIAIAYGLGAKTMSVSFEKGATARRTATPGWYNNEAFSAFAKKDGIEDKNLILDAFLNASKEEVIKEAKTFFNGEKIDLLIYSLAAPVRMDESTGTLYRSSLKPIGKKYNGIGVDFLTEELLEVSIDPANEDDIKSTVKVMGGEDWKLWTDALLNADLLAENAINVAYSYIGPEMTKAVYREGTIGKAKDHLEATAHELDKEMQEKIKGHAYVSVNKAVVTRSSAVIPTVPLYIGILFKVMKNKGLHEGCIEQMYRLLNEKLYNGGEVPVDSDNRIRLDDWELREDVQKEVLDSWNKLTKDNLKEIADLALFRKDYMNMHGFDEEGIDYSQDVQI.

Residues 74–75 (FE), 111–112 (DA), and 141–142 (LA) contribute to the NAD(+) site. Tyr-227 provides a ligand contact to substrate. Tyr-237 (proton donor) is an active-site residue. NAD(+)-binding positions include Lys-246 and 276 to 278 (VVT).

It belongs to the TER reductase family. Monomer.

The catalysed reaction is a 2,3-saturated acyl-CoA + NAD(+) = a (2E)-enoyl-CoA + NADH + H(+). It functions in the pathway lipid metabolism; fatty acid biosynthesis. Involved in the fatty acid synthesis (FAS II). Catalyzes the reduction of a carbon-carbon double bond in an enoyl moiety that is covalently linked to a coenzyme A (CoA). The chain is Trans-2-enoyl-CoA reductase [NADH] from Brachyspira hyodysenteriae (strain ATCC 49526 / WA1).